The primary structure comprises 506 residues: Lysine--tRNA ligase (506 aa).

Residues Glu416 and Glu423 each contribute to the Mg(2+) site.

This sequence belongs to the class-II aminoacyl-tRNA synthetase family. In terms of assembly, homodimer. Mg(2+) is required as a cofactor.

The protein localises to the cytoplasm. The catalysed reaction is tRNA(Lys) + L-lysine + ATP = L-lysyl-tRNA(Lys) + AMP + diphosphate. The sequence is that of Lysine--tRNA ligase from Xylella fastidiosa (strain M12).